A 394-amino-acid chain; its full sequence is MSKEKFERTKPHVNVGTIGHVDHGKTTLTAAITTVLAKTYGGSARAFDQIDNAPEEKARGITINTSHVEYDTPTRHYAHVDCPGHADYVKNMITGAAQMDGAILVVAATDGPMPQTREHILLGRQVGVPYIIVFLNKCDMVDDEELLELVEMEVRELLSQYDFPGDDTPIVRGSALKALEGDAEWEAKIIELAGHLDSYIPEPERAIDKPFLLPIEDVFSISGRGTVVTGRVERGIIKVGEEVEIVGIKDTAKSTCTGVEMFRKLLDEGRAGENVGVLLRGIKREEIERGQVLAKPGSIKPHTKFESEVYILSKDEGGRHTPFFKGYRPQFYFRTTDVTGTIELPEGVEMVMPGDNIKMVVTLIHPIAMDDGLRFAIREGGRTVGAGVVAKVLG.

Residues 10-204 (KPHVNVGTIG…HLDSYIPEPE (195 aa)) form the tr-type G domain. Residues 19-26 (GHVDHGKT) form a G1 region. 19 to 26 (GHVDHGKT) lines the GTP pocket. Residue Thr-26 coordinates Mg(2+). A G2 region spans residues 60–64 (GITIN). A G3 region spans residues 81–84 (DCPG). Residues 81 to 85 (DCPGH) and 136 to 139 (NKCD) each bind GTP. The G4 stretch occupies residues 136-139 (NKCD). Residues 174–176 (SAL) are G5.

This sequence belongs to the TRAFAC class translation factor GTPase superfamily. Classic translation factor GTPase family. EF-Tu/EF-1A subfamily. As to quaternary structure, monomer.

The protein resides in the cytoplasm. It carries out the reaction GTP + H2O = GDP + phosphate + H(+). Its function is as follows. GTP hydrolase that promotes the GTP-dependent binding of aminoacyl-tRNA to the A-site of ribosomes during protein biosynthesis. This is Elongation factor Tu from Cronobacter sakazakii (strain ATCC BAA-894) (Enterobacter sakazakii).